Reading from the N-terminus, the 251-residue chain is Malonyl-[acyl-carrier protein] O-methyltransferase (251 aa).

This sequence belongs to the methyltransferase superfamily.

The catalysed reaction is malonyl-[ACP] + S-adenosyl-L-methionine = malonyl-[ACP] methyl ester + S-adenosyl-L-homocysteine. It participates in cofactor biosynthesis; biotin biosynthesis. Converts the free carboxyl group of a malonyl-thioester to its methyl ester by transfer of a methyl group from S-adenosyl-L-methionine (SAM). It allows to synthesize pimeloyl-ACP via the fatty acid synthetic pathway. The protein is Malonyl-[acyl-carrier protein] O-methyltransferase of Pseudescherichia vulneris (Escherichia vulneris).